We begin with the raw amino-acid sequence, 251 residues long: Hydroxyacylglutathione hydrolase (251 aa).

Zn(2+) contacts are provided by histidine 53, histidine 55, aspartate 57, histidine 58, histidine 110, aspartate 127, and histidine 165.

This sequence belongs to the metallo-beta-lactamase superfamily. Glyoxalase II family. As to quaternary structure, monomer. Zn(2+) is required as a cofactor.

The enzyme catalyses an S-(2-hydroxyacyl)glutathione + H2O = a 2-hydroxy carboxylate + glutathione + H(+). Its pathway is secondary metabolite metabolism; methylglyoxal degradation; (R)-lactate from methylglyoxal: step 2/2. In terms of biological role, thiolesterase that catalyzes the hydrolysis of S-D-lactoyl-glutathione to form glutathione and D-lactic acid. The polypeptide is Hydroxyacylglutathione hydrolase (Serratia proteamaculans (strain 568)).